Reading from the N-terminus, the 250-residue chain is MSSFFSDSPTHPANLICELCRLFYNNGWVTGTGGGISIRDVDGPNPNIVYIAPSGIQKERLQPREMFVAELPGKILRSPNDDSDGQPLSPDLAKSFRYKPSACTPLFLSCYNMRDAGACIHTHSQNAVMATLLFEDKVEFSMSHIEQIKALPHLQVDSDTGKVQKVGSMQFYDTMVLPIIDNTPHEEDLTDSLQEAIKNYPGATAVLVRRHGIYVWGETVWKAKVYNEAIDYLLELAIKMHQAGIPLVKK.

Residue Cys103 coordinates substrate. Residues His121 and His123 each coordinate Zn(2+). The Proton donor/acceptor role is filled by Glu146. His211 provides a ligand contact to Zn(2+).

The protein belongs to the aldolase class II family. MtnB subfamily. The cofactor is Zn(2+).

The protein resides in the cytoplasm. The enzyme catalyses 5-(methylsulfanyl)-D-ribulose 1-phosphate = 5-methylsulfanyl-2,3-dioxopentyl phosphate + H2O. The protein operates within amino-acid biosynthesis; L-methionine biosynthesis via salvage pathway; L-methionine from S-methyl-5-thio-alpha-D-ribose 1-phosphate: step 2/6. Functionally, catalyzes the dehydration of methylthioribulose-1-phosphate (MTRu-1-P) into 2,3-diketo-5-methylthiopentyl-1-phosphate (DK-MTP-1-P). This Clavispora lusitaniae (strain ATCC 42720) (Yeast) protein is Methylthioribulose-1-phosphate dehydratase.